The following is a 273-amino-acid chain: 4-hydroxy-tetrahydrodipicolinate reductase (273 aa).

12-17 (GAGGRM) serves as a coordination point for NAD(+). Arginine 39 is a binding site for NADP(+). Residues 102–104 (GTT) and 126–129 (AANF) each bind NAD(+). Histidine 159 acts as the Proton donor/acceptor in catalysis. (S)-2,3,4,5-tetrahydrodipicolinate is bound at residue histidine 160. Residue lysine 163 is the Proton donor of the active site. Position 169-170 (169-170 (GT)) interacts with (S)-2,3,4,5-tetrahydrodipicolinate.

It belongs to the DapB family. Homotetramer.

Its subcellular location is the cytoplasm. The catalysed reaction is (S)-2,3,4,5-tetrahydrodipicolinate + NAD(+) + H2O = (2S,4S)-4-hydroxy-2,3,4,5-tetrahydrodipicolinate + NADH + H(+). It catalyses the reaction (S)-2,3,4,5-tetrahydrodipicolinate + NADP(+) + H2O = (2S,4S)-4-hydroxy-2,3,4,5-tetrahydrodipicolinate + NADPH + H(+). It participates in amino-acid biosynthesis; L-lysine biosynthesis via DAP pathway; (S)-tetrahydrodipicolinate from L-aspartate: step 4/4. Catalyzes the conversion of 4-hydroxy-tetrahydrodipicolinate (HTPA) to tetrahydrodipicolinate. In Sodalis glossinidius (strain morsitans), this protein is 4-hydroxy-tetrahydrodipicolinate reductase.